A 358-amino-acid chain; its full sequence is MEELSQALASSFSVSQELNSTAAPHPRLSQYKSKYSSLEQSERRRQLLELQKSKRLDYVNHARRLAEDDWTGMESGEEEKKKDEEEMDLDPVKKLPKRYANQLMLSEWLIDVPSDLGQEWIVVVCPVGKRALIVASRGSTSAYTKSGYCVNRFSSLLPGGNRRNSTTAKDYTILDCIYSEVNQTYYVLDVMCWRGHPFYDCQTDFRFYWMNSKLPEEEGLGEKTKINPFKFVGLKNFPCTPESLCKVLSMDFPFEVDGLLFYHKQTHYSPGSTPLVGWLRPYMVSDILGVAVPAGPLTTKPEYAGHQLQQIIEHKRSQEDTKEKLTHKASENGHYELEHLSTPKLRSPPHSSESLMDS.

An N-acetylmethionine modification is found at Met1. Disordered regions lie at residues 1–39 (MEEL…SSLE) and 69–89 (DWTG…EMDL). The necessary for interaction with KPNB1 and m3G-cap U1 and U5 snRNP import receptor activity stretch occupies residues 1–65 (MEELSQALAS…LDYVNHARRL (65 aa)). Positions 1-160 (MEELSQALAS…NRFSSLLPGG (160 aa)) are necessary for interaction with XPO1. Polar residues-rich tracts occupy residues 7–22 (ALAS…NSTA) and 30–39 (QYKSKYSSLE). An IBB domain is found at 11–73 (SFSVSQELNS…RLAEDDWTGM (63 aa)). Ser75 is subject to Phosphoserine. The tract at residues 128-130 (GKR) is interaction with m3G-cap structure. Positions 210–329 (MNSKLPEEEG…DTKEKLTHKA (120 aa)) are necessary for binding to the m3G-cap structure. Residues 315 to 341 (KRSQEDTKEKLTHKASENGHYELEHLS) show a composition bias toward basic and acidic residues. The interval 315-358 (KRSQEDTKEKLTHKASENGHYELEHLSTPKLRSPPHSSESLMDS) is disordered. Residues 349-358 (PHSSESLMDS) are compositionally biased toward polar residues. Phosphoserine is present on Ser351.

It belongs to the snurportin family. As to quaternary structure, component of an import snRNP complex composed of KPNB1, SNUPN, SMN1 and ZNF259. Component of a nuclear export receptor complex composed of KPNB1, Ran, SNUPN and XPO1. Found in a trimeric export complex with SNUPN, Ran and XPO1. Interacts (via IBB domain) with KPNB1; the interaction is direct. Interacts with DDX20, IPO7, SMN1, SNRPB and XPO1. Interacts directly with XPO1. Its interaction with XPO1 and binding to m3G-cap U snRNPs appears to be mutually exclusive. Can form homomers.

It localises to the nucleus. The protein resides in the cytoplasm. Functions as an U snRNP-specific nuclear import adapter. Involved in the trimethylguanosine (m3G)-cap-dependent nuclear import of U snRNPs. Binds specifically to the terminal m3G-cap U snRNAs. This is Snurportin-1 (Snupn) from Rattus norvegicus (Rat).